A 97-amino-acid chain; its full sequence is Core protein A15 homolog (97 aa).

Belongs to the chordopoxvirinae A15 family. As to quaternary structure, part of a complex composed of A30, G7, F10 kinase, A15, D2, D3, and J1.

The protein localises to the host cytoplasm. The protein resides in the virion. Its function is as follows. Late protein which is a part of a large complex required for early virion morphogenesis. This complex participates in the formation of virosomes and the incorporation of virosomal contents into nascent immature virions. A15 is required for the stability and kinase activity of F10. The polypeptide is Core protein A15 homolog (Vertebrata (FPV)).